We begin with the raw amino-acid sequence, 321 residues long: Homoserine kinase (321 aa).

Belongs to the pseudomonas-type ThrB family.

It carries out the reaction L-homoserine + ATP = O-phospho-L-homoserine + ADP + H(+). The protein operates within amino-acid biosynthesis; L-threonine biosynthesis; L-threonine from L-aspartate: step 4/5. The polypeptide is Homoserine kinase (Allorhizobium ampelinum (strain ATCC BAA-846 / DSM 112012 / S4) (Agrobacterium vitis (strain S4))).